Reading from the N-terminus, the 299-residue chain is Ankyrin repeat domain-containing protein 54 (299 aa).

A disordered region spans residues 1–27; the sequence is MAATGGGAEDESRSGRSSSEGECAVAP. Ala2 is modified (N-acetylalanine). Ser62 is subject to Phosphoserine. The Nuclear localization signal (NLS) signature appears at 98–116; the sequence is RRLGPTGKEVHALKRLRDS. 4 ANK repeats span residues 108-137, 141-170, 174-203, and 207-239; these read HALK…DPCA, KGRT…DPNQ, LGNT…RVDA, and AGRT…EVKQ. The interval 140-240 is LYN-binding; the sequence is DKGRTALHFA…EAVRLEVKQI (101 aa). The Nuclear export signal (NES) signature appears at 282–292; that stretch reads LLASFTSLSLQ.

In terms of assembly, interacts (via ankyrin repeat region) with LYN (via SH3-domain) in an activation-independent status of LYN. Forms a multiprotein complex with LYN and HCLS1. Interacts with TSN2, VAV1, DBNL and LASP1.

The protein localises to the nucleus. The protein resides in the cytoplasm. It localises to the midbody. Functionally, plays an important role in regulating intracellular signaling events associated with erythroid terminal differentiation. This Rattus norvegicus (Rat) protein is Ankyrin repeat domain-containing protein 54 (Ankrd54).